The following is a 283-amino-acid chain: Protease HtpX homolog (283 aa).

The next 2 membrane-spanning stretches (helical) occupy residues 7–27 (TAVL…VLGG) and 29–49 (QGMA…YWFS). Position 131 (His-131) interacts with Zn(2+). Glu-132 is a catalytic residue. A Zn(2+)-binding site is contributed by His-135. 2 consecutive transmembrane segments (helical) span residues 146 to 166 (ISAT…FFGG) and 177 to 197 (IAGI…QMAI). Glu-202 lines the Zn(2+) pocket.

Belongs to the peptidase M48B family. Requires Zn(2+) as cofactor.

The protein localises to the cell inner membrane. The protein is Protease HtpX homolog of Methylibium petroleiphilum (strain ATCC BAA-1232 / LMG 22953 / PM1).